The chain runs to 236 residues: Leucyl/phenylalanyl-tRNA--protein transferase (236 aa).

Belongs to the L/F-transferase family.

It is found in the cytoplasm. It catalyses the reaction N-terminal L-lysyl-[protein] + L-leucyl-tRNA(Leu) = N-terminal L-leucyl-L-lysyl-[protein] + tRNA(Leu) + H(+). The enzyme catalyses N-terminal L-arginyl-[protein] + L-leucyl-tRNA(Leu) = N-terminal L-leucyl-L-arginyl-[protein] + tRNA(Leu) + H(+). The catalysed reaction is L-phenylalanyl-tRNA(Phe) + an N-terminal L-alpha-aminoacyl-[protein] = an N-terminal L-phenylalanyl-L-alpha-aminoacyl-[protein] + tRNA(Phe). Functionally, functions in the N-end rule pathway of protein degradation where it conjugates Leu, Phe and, less efficiently, Met from aminoacyl-tRNAs to the N-termini of proteins containing an N-terminal arginine or lysine. This is Leucyl/phenylalanyl-tRNA--protein transferase from Yersinia pseudotuberculosis serotype O:1b (strain IP 31758).